A 506-amino-acid chain; its full sequence is Gamma-aminobutyric acid receptor subunit epsilon (506 aa).

The first 22 residues, 1 to 22 (MLSKVLPVLLGILLILQSRVEG), serve as a signal peptide directing secretion. The disordered stretch occupies residues 23–66 (PQTESKNEASSRDVVYGPQPQPLENQLLSEETKSTETETGSRVG). Over 23 to 280 (PQTESKNEAS…FNVSRRFGYV (258 aa)) the chain is Extracellular. The N-linked (GlcNAc...) asparagine glycan is linked to asparagine 134. A disulfide bond links cysteine 195 and cysteine 209. An N-linked (GlcNAc...) asparagine glycan is attached at asparagine 252. A helical transmembrane segment spans residues 281-301 (AFQNYVPSSVTTMLSWVSFWI). At 302 to 307 (KTESAP) the chain is on the cytoplasmic side. Residues 308 to 327 (ARTSLGITSVLTMTTLGTFS) form a helical membrane-spanning segment. The Extracellular segment spans residues 328–343 (RKNFPRVSYITALDFY). Residues 344 to 364 (IAICFVFCFCALLEFAVLNFL) traverse the membrane as a helical segment. The Cytoplasmic segment spans residues 365 to 485 (IYNQTKAHAS…HVYRLDNYSR (121 aa)). A disordered region spans residues 413-438 (EGSDGEERPSCSAQQPPSPGSPEGPR). A helical membrane pass occupies residues 486 to 506 (VVFPVTFFFFNVLYWLVCLNL).

The protein belongs to the ligand-gated ion channel (TC 1.A.9) family. Gamma-aminobutyric acid receptor (TC 1.A.9.5) subfamily. GABRE sub-subfamily. Heteropentamer, formed by a combination of alpha (GABRA1-6), beta (GABRB1-3), gamma (GABRG1-3), delta (GABRD), epsilon (GABRE), rho (GABRR1-3), pi (GABRP) and theta (GABRQ) chains, each subunit exhibiting distinct physiological and pharmacological properties. As to expression, expressed in many tissues. Highest levels of expression in adult heart and placenta.

The protein localises to the cell membrane. Its subcellular location is the postsynaptic cell membrane. The enzyme catalyses chloride(in) = chloride(out). Potentiated by pentobarbital, loreclezole, and lanthanum and inhibited by zinc and furosemide. Introduction of the epsilon subunit to the receptor complex resulted in diminished modulatory effects by etomidate, propofol, pregnanolone and flurazepam. Functionally, epsilon subunit of the heteropentameric ligand-gated chloride channel gated by gamma-aminobutyric acid (GABA), a major inhibitory neurotransmitter in the brain. GABA-gated chloride channels, also named GABA(A) receptors (GABAAR), consist of five subunits arranged around a central pore and contain GABA active binding site(s) located at the alpha and beta subunit interfaces. When activated by GABA, GABAARs selectively allow the flow of chloride anions across the cell membrane down their electrochemical gradient. GABAARs containing epsilon subunits also permit spontaneous chloride channel activity while preserving the structural information required for GABA-gated openings. GABARs containing epsilon subunit may regulate cardiac function. The sequence is that of Gamma-aminobutyric acid receptor subunit epsilon from Homo sapiens (Human).